A 508-amino-acid chain; its full sequence is Photosystem II CP47 reaction center protein (508 aa).

6 consecutive transmembrane segments (helical) span residues 21 to 36 (AVHI…WAGS), 101 to 115 (IVFS…IWHW), 140 to 156 (GIHL…FGAF), 203 to 218 (IAAG…FHLS), 237 to 252 (VLSS…AFVV), and 457 to 472 (SFAL…HGAR).

The protein belongs to the PsbB/PsbC family. PsbB subfamily. In terms of assembly, PSII is composed of 1 copy each of membrane proteins PsbA, PsbB, PsbC, PsbD, PsbE, PsbF, PsbH, PsbI, PsbJ, PsbK, PsbL, PsbM, PsbT, PsbX, PsbY, PsbZ, Psb30/Ycf12, at least 3 peripheral proteins of the oxygen-evolving complex and a large number of cofactors. It forms dimeric complexes. It depends on Binds multiple chlorophylls. PSII binds additional chlorophylls, carotenoids and specific lipids. as a cofactor.

It is found in the plastid. The protein resides in the chloroplast thylakoid membrane. One of the components of the core complex of photosystem II (PSII). It binds chlorophyll and helps catalyze the primary light-induced photochemical processes of PSII. PSII is a light-driven water:plastoquinone oxidoreductase, using light energy to abstract electrons from H(2)O, generating O(2) and a proton gradient subsequently used for ATP formation. This Buxus microphylla (Littleleaf boxwood) protein is Photosystem II CP47 reaction center protein.